Consider the following 541-residue polypeptide: Chaperonin GroEL (541 aa).

Residues 29-32, 86-90, Gly-413, 480-482, and Asp-496 contribute to the ATP site; these read TLGP, DGTTT, and NAA.

This sequence belongs to the chaperonin (HSP60) family. Forms a cylinder of 14 subunits composed of two heptameric rings stacked back-to-back. Interacts with the co-chaperonin GroES.

The protein resides in the cytoplasm. It carries out the reaction ATP + H2O + a folded polypeptide = ADP + phosphate + an unfolded polypeptide.. Functionally, together with its co-chaperonin GroES, plays an essential role in assisting protein folding. The GroEL-GroES system forms a nano-cage that allows encapsulation of the non-native substrate proteins and provides a physical environment optimized to promote and accelerate protein folding. This chain is Chaperonin GroEL, found in Gardnerella vaginalis.